The following is a 131-amino-acid chain: Large ribosomal subunit protein bL17 (131 aa).

It belongs to the bacterial ribosomal protein bL17 family. As to quaternary structure, part of the 50S ribosomal subunit. Contacts protein L32.

This is Large ribosomal subunit protein bL17 from Burkholderia ambifaria (strain MC40-6).